The primary structure comprises 1004 residues: NADH:acrylate oxidoreductase (1004 aa).

Thr455 carries the FMN phosphoryl threonine modification. Ala508, Glu527, Asn535, Thr536, Gly540, Gly541, and Asp775 together coordinate FAD. The active-site Proton donor is the Arg834. FAD is bound by residues His941, Glu970, Ala985, and Leu986.

Belongs to the FAD-dependent oxidoreductase 2 family. FRD/SDH subfamily. It depends on FAD as a cofactor. The cofactor is FMN. Is flavinylated on Thr-455 by ApbE, encoded in a neighboring gene. Flavinylation is essential for catalytic activity.

It catalyses the reaction acrylate + NADH + H(+) = propanoate + NAD(+). Its function is as follows. Catalyzes the NADH-dependent reduction of acrylate to propanoate. The principal role of ARD in Vibrio seems to be the energy-saving detoxification of acrylate coming from the environment. May also use acrylate as the terminal electron acceptor for NADH regeneration at oxygen deficiency. NADPH cannot replace NADH as the electron donor. Is also able to reduce methacrylate in vitro, but with a much lower efficiency. The chain is NADH:acrylate oxidoreductase from Vibrio harveyi (Beneckea harveyi).